A 159-amino-acid polypeptide reads, in one-letter code: Succinate dehydrogenase assembly factor 2, mitochondrial (159 aa).

The transit peptide at 1–14 (MASFCLSRCCALRG) directs the protein to the mitochondrion.

This sequence belongs to the SDHAF2 family. As to quaternary structure, interacts with the flavoprotein subunit within the SDH catalytic dimer.

The protein resides in the mitochondrion matrix. In terms of biological role, plays an essential role in the assembly of succinate dehydrogenase (SDH), an enzyme complex (also referred to as respiratory complex II) that is a component of both the tricarboxylic acid (TCA) cycle and the mitochondrial electron transport chain, and which couples the oxidation of succinate to fumarate with the reduction of ubiquinone (coenzyme Q) to ubiquinol. Required for flavinylation (covalent attachment of FAD) of the flavoprotein subunit of the SDH catalytic dimer. In Culex quinquefasciatus (Southern house mosquito), this protein is Succinate dehydrogenase assembly factor 2, mitochondrial.